The sequence spans 388 residues: Basigin (388 aa).

Positions 1–21 are cleaved as a signal peptide; sequence MAAGADVPCAVLALLVLGSLA. Over 27-323 the chain is Extracellular; that stretch reads TAGFIKSPLS…SGSATVNLRV (297 aa). Residues 43–131 form the Ig-like domain; it reads DSVELHCEAV…NHLSKSPKVK (89 aa). Intrachain disulfides connect cysteine 49/cysteine 113 and cysteine 162/cysteine 211. The region spanning 143-218 is the Ig-like C2-type domain; it reads ERPVITGQYS…YECIYNTNPV (76 aa). Residues asparagine 163, asparagine 222, asparagine 280, asparagine 286, and asparagine 307 are each glycosylated (N-linked (GlcNAc...) asparagine). The Ig-like V-type domain maps to 229-323; sequence PQVVAYKKSE…SGSATVNLRV (95 aa). Cysteine 250 and cysteine 306 are oxidised to a cystine. The chain crosses the membrane as a helical span at residues 324 to 344; that stretch reads RSRLAALWPFLGIVAEVLVLV. The Cytoplasmic segment spans residues 345–388; sequence TIIFIYEKRRKPDEVLDDDDGGSAPLKSNATNHKDKNVRQRNAN. Residues 358–388 form a disordered region; the sequence is EVLDDDDGGSAPLKSNATNHKDKNVRQRNAN.

In terms of assembly, interacts with NXNL1, SLC2A1 and SLC16A1. In terms of processing, N-glycosylated. Retinal cone photoreceptors (at protein level). As to expression, brain endothelial cells, kidney epithelial cells and erythroblasts (at protein level).

The protein resides in the cell membrane. It is found in the photoreceptor inner segment. It localises to the cell projection. The protein localises to the cilium. Its subcellular location is the photoreceptor outer segment. The protein resides in the endoplasmic reticulum membrane. It is found in the basolateral cell membrane. Essential for normal retinal maturation and development. Acts as a retinal cell surface receptor for NXNL1 and plays an important role in NXNL1-mediated survival of retinal cone photoreceptors. In association with glucose transporter SLC16A1/GLUT1 and NXNL1, promotes retinal cone survival by enhancing aerobic glycolysis and accelerating the entry of glucose into photoreceptors. In terms of biological role, signaling receptor for cyclophilins, essential for PPIA/CYPA and PPIB/CYPB-dependent signaling related to chemotaxis and adhesion of immune cells. Plays an important role in targeting the monocarboxylate transporters SLC16A1/GLUT1, SLC16A3, SLC16A8, SLC16A11 and SLC16A12 to the plasma membrane. Acts as a coreceptor for vascular endothelial growth factor receptor 2 (KDR/VEGFR2) in endothelial cells enhancing its VEGFA-mediated activation and downstream signaling. Promotes angiogenesis through EPAS1/HIF2A-mediated up-regulation of VEGFA and KDR/VEGFR2 in endothelial cells. This chain is Basigin (BSG), found in Gallus gallus (Chicken).